Here is a 270-residue protein sequence, read N- to C-terminus: UPF0354 protein BA_4944/GBAA_4944/BAS4588 (270 aa).

The protein belongs to the UPF0354 family.

The sequence is that of UPF0354 protein BA_4944/GBAA_4944/BAS4588 from Bacillus anthracis.